We begin with the raw amino-acid sequence, 293 residues long: MHPRFAKPLDTLSAPLKAALLPMLDNDFQARFTPQQVATLKAATGLEDRALRLALLPLAAACSVAPISKFFVGAIACGLSGTWYFGANMEFAGQGLFHSVHAEQSAISNAWLGGETGISEITVNYTPCGHCRQFMNELSTAKTLQVSLPDDLSALQSFLPHSFGPADLDITDALMSPQAHDELVLESEDPIWRAALAAARQSYAPYSQGYAAVALLFADGRLFCGRYAENAAFNPSLPPMQMACAHAVLCGEDLASIRRAVLLESKNGQISQRDSAQSTLKALGSVELEYQAV.

CMP/dCMP-type deaminase domains lie at 47 to 166 and 186 to 293; these read EDRA…FGPA and ESED…YQAV. 88–90 contacts substrate; that stretch reads NME. Histidine 101 lines the Zn(2+) pocket. Catalysis depends on glutamate 103, which acts as the Proton donor. Zn(2+)-binding residues include cysteine 128 and cysteine 131.

The protein belongs to the cytidine and deoxycytidylate deaminase family. In terms of assembly, homodimer. Zn(2+) is required as a cofactor.

The catalysed reaction is cytidine + H2O + H(+) = uridine + NH4(+). It catalyses the reaction 2'-deoxycytidine + H2O + H(+) = 2'-deoxyuridine + NH4(+). Functionally, this enzyme scavenges exogenous and endogenous cytidine and 2'-deoxycytidine for UMP synthesis. This chain is Cytidine deaminase, found in Aeromonas salmonicida (strain A449).